The sequence spans 60 residues: Anionic antimicrobial peptide 2 (60 aa).

As to expression, hemolymph.

It localises to the secreted. In terms of biological role, antimicrobial protein. Has antibacterial activity against the Gram-positive bacteria M.luteus (MIC=86.6 uM), L.monocytogenes (MIC=86.6 uM), and S.lutea (MIC=86.6 uM). Lacks antibacterial activity against the Gram-positive bacteria B.circulans and S.aureus, and the Gram-negative bacteria E.coli D31, E.coli ATCC 25922, and S.typhimurium. Has antifungal activity against P.pastoris (MIC=86.6 uM) and P.stipitis (MIC=90.9 uM), but lacks antifungal activity against A.niger, C.albicans, C.albidus, C.fructus, C.wickerhamii, F.oxysporum, S.cerevisiae, S.pombe, T.harzianum, and Z.marxianus. This Galleria mellonella (Greater wax moth) protein is Anionic antimicrobial peptide 2.